A 905-amino-acid polypeptide reads, in one-letter code: Microtubule-associated protein 10 (905 aa).

Disordered stretches follow at residues 30–51 (AAAV…SSPR), 199–235 (TRTG…KPLG), 329–362 (APEE…AHEH), 434–458 (SPES…GGCE), 547–586 (SSAE…FDEP), 721–772 (RSFK…GSPV), and 786–855 (KSLE…SSYL). Over residues 34–43 (EQEEEEEEKE) the composition is skewed to acidic residues. Over residues 208 to 227 (SPQTQQERQQLQQPASQPSP) the composition is skewed to low complexity. Residues 443-453 (CRSEAKKDKRS) are compositionally biased toward basic and acidic residues. Over residues 567–579 (ASFTENSDTSRQI) the composition is skewed to polar residues. Basic and acidic residues predominate over residues 721–736 (RSFKAHDSSSRTENPK). Residues 737 to 748 (HSQYTSKSSDTG) are compositionally biased toward polar residues. The segment covering 790–801 (EASSISASDLSS) has biased composition (low complexity). The segment covering 830–855 (SVKTRSSWKSLEKSQSPQTSQVSSYL) has biased composition (polar residues).

Interacts (via middle region) with microtubules. In terms of tissue distribution, expressed in different cell lines (at protein level).

The protein localises to the cytoplasm. It localises to the cytoskeleton. The protein resides in the spindle pole. It is found in the microtubule organizing center. Its subcellular location is the centrosome. The protein localises to the midbody. Its function is as follows. Microtubule-associated protein (MAP) that plays a role in the regulation of cell division; promotes microtubule stability and participates in the organization of the spindle midzone and normal progress of cytokinesis. The polypeptide is Microtubule-associated protein 10 (MAP10) (Homo sapiens (Human)).